An 87-amino-acid polypeptide reads, in one-letter code: U3-theraphotoxin-Hhn1a 17 (87 aa).

A signal peptide spans 1–24 (MVNVKASMFLTFAGLVLLFVVCYA). Residues 25-52 (SESEEKEFPKEMLSSIFAVDNDFKQEER) constitute a propeptide that is removed on maturation. 3 disulfides stabilise this stretch: Cys-54/Cys-67, Cys-61/Cys-72, and Cys-66/Cys-79.

This sequence belongs to the neurotoxin 10 (Hwtx-1) family. 51 (Hntx-8) subfamily. Hntx-8 sub-subfamily. As to expression, expressed by the venom gland.

The protein localises to the secreted. Its function is as follows. Ion channel inhibitor. The protein is U3-theraphotoxin-Hhn1a 17 of Cyriopagopus hainanus (Chinese bird spider).